The sequence spans 339 residues: NADH-quinone oxidoreductase subunit H (339 aa).

The next 9 membrane-spanning stretches (helical) occupy residues 10–30 (FPLI…ILCV), 50–70 (PNVV…KLLF), 82–102 (ILFI…WAVV), 115–135 (VGVL…IIAG), 161–181 (MGLV…SGII), 187–207 (IPWW…ISVL), 235–255 (MGFA…SAMT), 275–295 (IPGF…FLWI), and 310–330 (LGWK…SSVL).

This sequence belongs to the complex I subunit 1 family. NDH-1 is composed of 14 different subunits. Subunits NuoA, H, J, K, L, M, N constitute the membrane sector of the complex.

It localises to the cell inner membrane. The catalysed reaction is a quinone + NADH + 5 H(+)(in) = a quinol + NAD(+) + 4 H(+)(out). In terms of biological role, NDH-1 shuttles electrons from NADH, via FMN and iron-sulfur (Fe-S) centers, to quinones in the respiratory chain. The immediate electron acceptor for the enzyme in this species is believed to be ubiquinone. Couples the redox reaction to proton translocation (for every two electrons transferred, four hydrogen ions are translocated across the cytoplasmic membrane), and thus conserves the redox energy in a proton gradient. This subunit may bind ubiquinone. The chain is NADH-quinone oxidoreductase subunit H from Rickettsia canadensis (strain McKiel).